Here is a 338-residue protein sequence, read N- to C-terminus: Probable tRNA pseudouridine synthase B (338 aa).

D80 serves as the catalytic Nucleophile. The PUA domain occupies 247 to 322 (LPRIEIRDTA…IMVDTKRVLM (76 aa)).

This sequence belongs to the pseudouridine synthase TruB family. Type 2 subfamily.

The enzyme catalyses uridine(55) in tRNA = pseudouridine(55) in tRNA. Its function is as follows. Could be responsible for synthesis of pseudouridine from uracil-55 in the psi GC loop of transfer RNAs. The chain is Probable tRNA pseudouridine synthase B from Methanopyrus kandleri (strain AV19 / DSM 6324 / JCM 9639 / NBRC 100938).